The primary structure comprises 467 residues: Argininosuccinate lyase (467 aa).

It belongs to the lyase 1 family. Argininosuccinate lyase subfamily.

It is found in the cytoplasm. It carries out the reaction 2-(N(omega)-L-arginino)succinate = fumarate + L-arginine. The protein operates within amino-acid biosynthesis; L-arginine biosynthesis; L-arginine from L-ornithine and carbamoyl phosphate: step 3/3. This is Argininosuccinate lyase from Campylobacter curvus (strain 525.92).